The sequence spans 1005 residues: Protein TIC 214 (1005 aa).

A run of 6 helical transmembrane segments spans residues 25–45 (VGLY…LFLL), 67–87 (FFTG…HLAL), 91–111 (HTIL…SNSG), 131–151 (SFQL…SVLG), 177–197 (FVGW…VFVW), and 304–324 (LFSI…PLLY). Disordered regions lie at residues 457 to 481 (VEEG…EREE) and 767 to 833 (KKKK…KRKQ). Over residues 783-810 (KQKKVKSKQKKVKSKQKKVKSKQKKVKS) the composition is skewed to basic residues. Residues 811–824 (KQNEIKSKQNEIKS) show a composition bias toward basic and acidic residues.

This sequence belongs to the TIC214 family. As to quaternary structure, part of the Tic complex.

It is found in the plastid. The protein resides in the chloroplast inner membrane. Involved in protein precursor import into chloroplasts. May be part of an intermediate translocation complex acting as a protein-conducting channel at the inner envelope. This chain is Protein TIC 214, found in Oenothera berteroana (Bertero's evening primrose).